The chain runs to 198 residues: ATP-dependent Clp protease proteolytic subunit 1 (198 aa).

Residue Ser96 is the Nucleophile of the active site. The active site involves His121.

The protein belongs to the peptidase S14 family. Fourteen ClpP subunits assemble into 2 heptameric rings which stack back to back to give a disk-like structure with a central cavity, resembling the structure of eukaryotic proteasomes.

The protein localises to the cytoplasm. The enzyme catalyses Hydrolysis of proteins to small peptides in the presence of ATP and magnesium. alpha-casein is the usual test substrate. In the absence of ATP, only oligopeptides shorter than five residues are hydrolyzed (such as succinyl-Leu-Tyr-|-NHMec, and Leu-Tyr-Leu-|-Tyr-Trp, in which cleavage of the -Tyr-|-Leu- and -Tyr-|-Trp bonds also occurs).. Cleaves peptides in various proteins in a process that requires ATP hydrolysis. Has a chymotrypsin-like activity. Plays a major role in the degradation of misfolded proteins. The chain is ATP-dependent Clp protease proteolytic subunit 1 from Synechocystis sp. (strain ATCC 27184 / PCC 6803 / Kazusa).